Consider the following 406-residue polypeptide: Enoyl-[acyl-carrier-protein] reductase [NADH] (406 aa).

Residues 48–53, 74–75, 111–112, and 140–141 each bind NAD(+); these read GASTGF, FE, DA, and IA. Position 226 (Tyr226) interacts with substrate. Residue Tyr236 is the Proton donor of the active site. Residues Lys245 and 275-277 each bind NAD(+); that span reads LVT.

The protein belongs to the TER reductase family. Monomer.

The enzyme catalyses a 2,3-saturated acyl-[ACP] + NAD(+) = a (2E)-enoyl-[ACP] + NADH + H(+). Its pathway is lipid metabolism; fatty acid biosynthesis. Functionally, involved in the final reduction of the elongation cycle of fatty acid synthesis (FAS II). Catalyzes the reduction of a carbon-carbon double bond in an enoyl moiety that is covalently linked to an acyl carrier protein (ACP). This Coxiella burnetii (strain Dugway 5J108-111) protein is Enoyl-[acyl-carrier-protein] reductase [NADH].